We begin with the raw amino-acid sequence, 489 residues long: MGDRGGAGGSRRRRTGSRPSIQGGSGPAAAEEEVRDVGAGGDAPVRDTDKDGDVDVGSGHWDLRCHRLQDSLFSSDSGFSNYRGILNWCVVMLILSNARLFLENLIKYGILVDPIQVVSLFLKDPYSWPALCLVIVANIFAVAAFQVEKRLAVGALTEQAGLLLHGVNLATILCFPAAVAFLLESITPVGSVLALMVYTILFLKLFSYRDVNLWCRERRAGAKAKAALAGKKANGGAAQRTVSYPDNLTYRDLYYFLFAPTLCYELNFPRSPRIRKRFLLRRLLEMLFLTQLQVGLIQQWMVPAIQNSMKPFKDMDYSRIVERLLKLAVPNHLIWLIFFYWLFHSCLNAVAELMQFGDREFYRDWWNSESITYFWQNWNIPVHKWCIRHFYKPMLRRGSSKWAARTAVFLASAFFHEYLVSIPLRMFRLWAFTGMMAQIPLAWIVGRFFRGNYGNAAVWLSLIIGQPVAVLMYVHDYYVLNREAPAAGT.

A disordered region spans residues 1–54 (MGDRGGAGGSRRRRTGSRPSIQGGSGPAAAEEEVRDVGAGGDAPVRDTDKDGDV). Residues 1-80 (MGDRGGAGGS…SLFSSDSGFS (80 aa)) lie on the Cytoplasmic side of the membrane. An involved in homomerization region spans residues 1-88 (MGDRGGAGGS…FSNYRGILNW (88 aa)). Phosphoserine is present on serine 20. Residues 44 to 53 (PVRDTDKDGD) show a composition bias toward basic and acidic residues. A helical membrane pass occupies residues 81–115 (NYRGILNWCVVMLILSNARLFLENLIKYGILVDPI). The Lumenal segment spans residues 116–127 (QVVSLFLKDPYS). Positions 116 to 127 (QVVSLFLKDPYS) are extracellular loop 1 (EL1). The helical transmembrane segment at 128–153 (WPALCLVIVANIFAVAAFQVEKRLAV) threads the bilayer. An MBOAT fold region spans residues 128 to 489 (WPALCLVIVA…LNREAPAAGT (362 aa)). Topologically, residues 154–158 (GALTE) are cytoplasmic. The chain crosses the membrane as a helical span at residues 159 to 181 (QAGLLLHGVNLATILCFPAAVAF). Topologically, residues 182-188 (LLESITP) are lumenal. Residues 189-220 (VGSVLALMVYTILFLKLFSYRDVNLWCRERRA) form a helical membrane-spanning segment. The Cytoplasmic portion of the chain corresponds to 221–274 (GAKAKAALAGKKANGGAAQRTVSYPDNLTYRDLYYFLFAPTLCYELNFPRSPRI). Residues 225 to 277 (KAALAGKKANGGAAQRTVSYPDNLTYRDLYYFLFAPTLCYELNFPRSPRIRKR) form an intracellular loop 1 (IL1) region. A helical membrane pass occupies residues 275-309 (RKRFLLRRLLEMLFLTQLQVGLIQQWMVPAIQNSM). Over 310–316 (KPFKDMD) the chain is Lumenal. A helical transmembrane segment spans residues 317–354 (YSRIVERLLKLAVPNHLIWLIFFYWLFHSCLNAVAELM). Topologically, residues 355–400 (QFGDREFYRDWWNSESITYFWQNWNIPVHKWCIRHFYKPMLRRGSS) are cytoplasmic. The tract at residues 355–400 (QFGDREFYRDWWNSESITYFWQNWNIPVHKWCIRHFYKPMLRRGSS) is intracellular loop 2 (IL2). An FYXDWWN motif motif is present at residues 361-367 (FYRDWWN). An acyl-CoA contacts are provided by residues 375–383 (WQNWNIPVH), tyrosine 391, and arginine 405. Positions 381-395 (PVHKWCIRHFYKPML) are amphipathic helix (AH). The chain crosses the membrane as a helical span at residues 401 to 421 (KWAARTAVFLASAFFHEYLVS). Residue histidine 416 is part of the active site. The Lumenal portion of the chain corresponds to 422-429 (IPLRMFRL). Residues 430-448 (WAFTGMMAQIPLAWIVGRF) traverse the membrane as a helical segment. The Cytoplasmic segment spans residues 449 to 450 (FR). A helical membrane pass occupies residues 451-482 (GNYGNAAVWLSLIIGQPVAVLMYVHDYYVLNR). An an acyl-CoA-binding site is contributed by tyrosine 478. Topologically, residues 483–489 (EAPAAGT) are lumenal.

It belongs to the membrane-bound acyltransferase family. Sterol o-acyltransferase subfamily. As to quaternary structure, homodimer or homotetramer; both forms have similar enzymatic activities.

It is found in the endoplasmic reticulum membrane. The catalysed reaction is an acyl-CoA + a 1,2-diacyl-sn-glycerol = a triacyl-sn-glycerol + CoA. The enzyme catalyses all-trans-retinol + an acyl-CoA = an all-trans-retinyl ester + CoA. It catalyses the reaction 2-(9Z-octadecenoyl)-glycerol + (9Z)-octadecenoyl-CoA = 1,2-di-(9Z-octadecenoyl)-sn-glycerol + CoA. It carries out the reaction 1,2-di-(9Z-octadecenoyl)-sn-glycerol + (9Z)-octadecenoyl-CoA = 1,2,3-tri-(9Z-octadecenoyl)-glycerol + CoA. The catalysed reaction is all-trans-retinol + hexadecanoyl-CoA = all-trans-retinyl hexadecanoate + CoA. The enzyme catalyses 1-O-(9Z-octadecenyl)-glycerol + (9Z)-octadecenoyl-CoA = 1-O-(9Z-octadecyl)-3-(9Z-octadecenoyl)-glycerol + CoA. It catalyses the reaction 1-O-(9Z-octadecyl)-3-(9Z-octadecenoyl)-glycerol + (9Z)-octadecenoyl-CoA = 1-O-(9Z-octadecenyl)-2,3-di-(9Z-octadecenoyl)glycerol + CoA. It carries out the reaction 1-(9Z-octadecenoyl)-glycerol + (9Z)-octadecenoyl-CoA = 1,2-di-(9Z-octadecenoyl)-glycerol + CoA. The catalysed reaction is 1,2-di-(9Z-octadecenoyl)-glycerol + (9Z)-octadecenoate + H(+) = 1,2,3-tri-(9Z-octadecenoyl)-glycerol + H2O. The enzyme catalyses 1-octadecanoyl-2-(5Z,8Z,11Z,14Z-eicosatetraenoyl)-sn-glycerol + (9Z)-octadecenoyl-CoA = 1-octadecanoyl-2-(5Z,8Z,11Z,14Z)-eicosatetraenoyl-3-(9Z)-octadecenoyl-sn-glycerol + CoA. It catalyses the reaction hexadecane-1,2-diol + 2 hexadecanoyl-CoA = 1,2-O,O-dihexadecanoyl-1,2-hexadecanediol + 2 CoA. It carries out the reaction hexadecane-1,2-diol + hexadecanoyl-CoA = 2-hydroxyhexadecyl hexadecanoate + CoA. The catalysed reaction is 2-(9Z-octadecenoyl)-glycerol + hexadecanoyl-CoA = 1-hexadecanoyl-2-(9Z-octadecenoyl)-sn-glycerol + CoA. The enzyme catalyses 1,2-di-(9Z-octadecenoyl)-sn-glycerol + hexadecanoyl-CoA = 1,2-di-(9Z)-octadecenoyl-3-hexadecanoyl-sn-glycerol + CoA. It catalyses the reaction hexadecan-1-ol + hexadecanoyl-CoA = hexadecanyl hexadecanoate + CoA. It carries out the reaction 13-cis-retinol + hexadecanoyl-CoA = 13-cis-retinyl hexadecanoate + CoA. The catalysed reaction is 1,3-di-(9Z-octadecenoyl)-glycerol + (9Z)-octadecenoyl-CoA = 1,2,3-tri-(9Z-octadecenoyl)-glycerol + CoA. The enzyme catalyses 2,3-di-(9Z)-octadecenoyl-sn-glycerol + (9Z)-octadecenoyl-CoA = 1,2,3-tri-(9Z-octadecenoyl)-glycerol + CoA. The protein operates within lipid metabolism; glycerolipid metabolism. Catalyzes the terminal and only committed step in triacylglycerol synthesis by using diacylglycerol and fatty acyl CoA as substrates. Highly expressed in epithelial cells of the small intestine and its activity is essential for the absorption of dietary fats. In liver, plays a role in esterifying exogenous fatty acids to glycerol, and is required to synthesize fat for storage. Also present in female mammary glands, where it produces fat in the milk. May be involved in VLDL (very low density lipoprotein) assembly. In contrast to DGAT2 it is not essential for survival. Functions as the major acyl-CoA retinol acyltransferase (ARAT) in the skin, where it acts to maintain retinoid homeostasis and prevent retinoid toxicity leading to skin and hair disorders. Exhibits additional acyltransferase activities, includin acyl CoA:monoacylglycerol acyltransferase (MGAT), wax monoester and wax diester synthases. Also able to use 1-monoalkylglycerol (1-MAkG) as an acyl acceptor for the synthesis of monoalkyl-monoacylglycerol (MAMAG). In Bos taurus (Bovine), this protein is Diacylglycerol O-acyltransferase 1 (DGAT1).